The sequence spans 750 residues: MIIRSPEPEVKILVDRDPIKTSFEEWAKPGHFSRTIAKGPDTTTWIWNLHADAHDFDSHTSDLEEISRKVFSAHFGQLSIIFLWLSGMYFHGARFSNYEAWLSDPTHIGPSAQVVWPIVGQEILNGDVGGGFRGIQITSGFFQIWRASGITSELQLYCTAIGALVFAALMLFAGWFHYHKAAPKLAWFQDVESMLNHHLAGLLGLGSLSWAGHQVHVSLPINQFLNAGVDPKEIPLPHEFILNRDLLAQLYPSFAEGATPFFTLNWSKYSEFLTFRGGLDPVTGGLWLTDIAHHHLAIAILFLIAGHMYRTNWGIGHGLKDILEAHKGPFTGQGHKGLYEILTTSWHAQLSLNLAMLGSLTIVVAHHMYSMPPYPYLATDYATQLSLFTHHMWIGGFLIVGAAAHAAIFMVRDYDPTNRYNDLLDRVLRHRDAIISHLNWACIFLGFHSFGLYIHNDTMSALGRPQDMFSDTAIQLQPVFAQWIQKTHALAPGVTAPGETASTSLTWGGGELVAVGGKVALLPIPLGTADFLVHHIHAFTIHVTVLILLKGVLFARSSRLIPDKASLGFRFPCDGPGRGGTCQVSAWDHVFLGLFWMYNAISVVIFHFSWKMQSDVWGSISDQGVVTHITGGNFAQSSITINGWLRDFLWAQASQVIQSYGSSLSAYGLFFLGAHFVWAFSLMFLFSGRGYWQELIESIVWAHNKLKVAPATQPRALSIVQGRAVGVTHYLLGGIATTWAFFLARIIAVG.

A run of 8 helical transmembrane segments spans residues 70 to 93 (VFSA…FHGA), 156 to 179 (LYCT…FHYH), 195 to 219 (LNHH…HVSL), 291 to 309 (IAHH…GHMY), 346 to 369 (WHAQ…HHMY), 385 to 411 (LSLF…IFMV), 433 to 455 (AIIS…LYIH), and 531 to 549 (FLVH…LILL). Residues C573 and C582 each coordinate [4Fe-4S] cluster. The next 2 membrane-spanning stretches (helical) occupy residues 589-610 (HVFL…HFSW) and 664-686 (LSAY…MFLF). H675 contributes to the chlorophyll a' binding site. M683 and Y691 together coordinate chlorophyll a. W692 lines the phylloquinone pocket. The helical transmembrane segment at 724 to 744 (AVGVTHYLLGGIATTWAFFLA) threads the bilayer.

This sequence belongs to the PsaA/PsaB family. In terms of assembly, the PsaA/B heterodimer binds the P700 chlorophyll special pair and subsequent electron acceptors. PSI consists of a core antenna complex that captures photons, and an electron transfer chain that converts photonic excitation into a charge separation. The eukaryotic PSI reaction center is composed of at least 11 subunits. The cofactor is P700 is a chlorophyll a/chlorophyll a' dimer, A0 is one or more chlorophyll a, A1 is one or both phylloquinones and FX is a shared 4Fe-4S iron-sulfur center..

It localises to the plastid. The protein resides in the chloroplast thylakoid membrane. It catalyses the reaction reduced [plastocyanin] + hnu + oxidized [2Fe-2S]-[ferredoxin] = oxidized [plastocyanin] + reduced [2Fe-2S]-[ferredoxin]. Functionally, psaA and PsaB bind P700, the primary electron donor of photosystem I (PSI), as well as the electron acceptors A0, A1 and FX. PSI is a plastocyanin-ferredoxin oxidoreductase, converting photonic excitation into a charge separation, which transfers an electron from the donor P700 chlorophyll pair to the spectroscopically characterized acceptors A0, A1, FX, FA and FB in turn. Oxidized P700 is reduced on the lumenal side of the thylakoid membrane by plastocyanin. The polypeptide is Photosystem I P700 chlorophyll a apoprotein A1 (Aethionema grandiflorum (Persian stone-cress)).